The primary structure comprises 59 residues: U-myrmeciitoxin(01)-Mg5a (59 aa).

An N-terminal signal peptide occupies residues 1-21 (MRLSYLSLALAIIFVLTIMHA). The propeptide occupies 22–38 (SNVEAKASADPEPDAVG).

In terms of tissue distribution, expressed by the venom gland.

The protein resides in the secreted. Functionally, may have antimicrobial properties, like most ant linear peptides. This chain is U-myrmeciitoxin(01)-Mg5a, found in Myrmecia gulosa (Red bulldog ant).